Reading from the N-terminus, the 251-residue chain is Flap endonuclease Xni (251 aa).

Asp-104 is a binding site for Mg(2+). The 5'-3' exonuclease domain maps to 160 to 250 (VQPQQLPDYW…DGNLQQLRLK (91 aa)). K(+) is bound by residues Leu-171, Ala-172, Pro-180, Val-182, and Ile-185. Residues 184–189 (GIGPKS) form an interaction with DNA region.

The protein belongs to the Xni family. The cofactor is Mg(2+). K(+) serves as cofactor.

Has flap endonuclease activity. During DNA replication, flap endonucleases cleave the 5'-overhanging flap structure that is generated by displacement synthesis when DNA polymerase encounters the 5'-end of a downstream Okazaki fragment. The sequence is that of Flap endonuclease Xni from Escherichia fergusonii (strain ATCC 35469 / DSM 13698 / CCUG 18766 / IAM 14443 / JCM 21226 / LMG 7866 / NBRC 102419 / NCTC 12128 / CDC 0568-73).